The following is a 336-amino-acid chain: Major histocompatibility complex class I-related protein 1 (336 aa).

The first 18 residues, 1–18 (MMLLLPLIIVLMMKLSDA), serve as a signal peptide directing secretion. The alpha-1 stretch occupies residues 19–105 (RTHSLRYFRL…KQLQHHYNHS (87 aa)). An antigen-binding cleft region spans residues 19 to 197 (RTHSLRYFRL…EYGKDALQRT (179 aa)). Residues 19–298 (RTHSLRYFRL…QESETILLVV (280 aa)) lie on the Extracellular side of the membrane. Tyrosine 25 and arginine 27 together coordinate 8-(9H-purin-6-yl)-2-oxa-8-azabicyclo[3.3.1]nona-3,6-diene-4,6-dicarbaldehyde. 5-(2-oxoethylideneamino)-6-(D-ribitylamino)uracil-binding residues include arginine 27, serine 42, and lysine 61. 5-(2-oxopropylideneamino)-6-(D-ribitylamino)uracil is bound by residues arginine 27, serine 42, and lysine 61. Arginine 27, serine 42, and lysine 61 together coordinate 7-hydroxy-6-methyl-8-(1-D-ribityl)lumazine. Positions 61 and 76 each coordinate 8-(9H-purin-6-yl)-2-oxa-8-azabicyclo[3.3.1]nona-3,6-diene-4,6-dicarbaldehyde. Lysine 61 contributes to the 2-amino-4-oxopteridine-6-carbaldehyde binding site. Residue lysine 61 coordinates pyridoxal. N-linked (GlcNAc...) asparagine glycosylation is present at asparagine 103. The segment at 106–197 (GFHTYQRMIG…EYGKDALQRT (92 aa)) is alpha-2. An 8-(9H-purin-6-yl)-2-oxa-8-azabicyclo[3.3.1]nona-3,6-diene-4,6-dicarbaldehyde-binding site is contributed by arginine 112. 3 residues coordinate 5-(2-oxoethylideneamino)-6-(D-ribitylamino)uracil: arginine 112, tyrosine 170, and glutamine 171. Positions 112, 170, and 171 each coordinate 5-(2-oxopropylideneamino)-6-(D-ribitylamino)uracil. Residues arginine 112, tyrosine 170, and glutamine 171 each coordinate 7-hydroxy-6-methyl-8-(1-D-ribityl)lumazine. Disulfide bonds link cysteine 116–cysteine 179 and cysteine 218–cysteine 274. The tract at residues 198–289 (EPPKVRVNHK…GVHMVLQGFQ (92 aa)) is alpha-3. One can recognise an Ig-like C1-type domain in the interval 200–295 (PKVRVNHKET…QGFQESETIL (96 aa)). The interval 290-298 (ESETILLVV) is connecting peptide. A helical transmembrane segment spans residues 299 to 319 (KAVGFIVLAIALAGVGILAWR). The Cytoplasmic portion of the chain corresponds to 320–336 (KRPRGKNKVICLSTPEH).

The protein belongs to the MHC class I family. In terms of assembly, heterotrimer that consists of MR1, B2M and metabolite antigen. Major classes of metabolite ligands presented by MR1 include riboflavin-related antigens, pyrimidines and ribityl lumazines, nucleobase adducts and folate derivatives. Forms reversible covalent Schiff base complexes with microbial pyrimidine-based metabolite, which serves as a molecular switch triggering complete folding, stable association with B2M and translocation of the ternary complex from endoplasmic reticulum to the plasma membrane. Alternatively, forms non-Schiff base complexes with ribityl lumazines. On antigen-presenting cells, the ternary complex interacts with TCR on MR1-restricted T cells. Interacts with TAPBP and TAPBPL chaperones in the endoplasmic reticulum. TAPBP associated or not with MHC class I peptide loading complex binds ligand-free MR1 or MR1-B2M complex, providing for stable MR1 pools ready for metabolite antigen processing. TAPBPL interacts with MR1 in a ligand-independent way; this interaction may stabilize MR1 pool and facilitate ligand loading and dissociation. Structurally, MR1-B2M heterodimer adopts a topology similar to classical MHC class I molecules, with alpha-1 and alpha-2 domains of MR1 forming the antigen-binding cleft composed of two alpha-helices resting on a floor of 7-stranded anti-parallel beta-pleated sheet. MR1-B2M heterodimer (via alpha-helices) interacts with TCR (via CDR domains). Post-translationally, N-glycosylated.

It localises to the cell membrane. The protein resides in the endoplasmic reticulum membrane. It is found in the golgi apparatus membrane. Its subcellular location is the early endosome membrane. The protein localises to the late endosome membrane. Its function is as follows. Antigen-presenting molecule specialized in displaying microbial pyrimidine-based metabolites to alpha-beta T cell receptors (TCR) on innate-type mucosal-associated invariant T (MAIT) cells. In complex with B2M preferentially presents riboflavin-derived metabolites to semi-invariant TCRs on MAIT cells, guiding immune surveillance of the microbial metabolome at mucosal epithelial barriers. Signature pyrimidine-based microbial antigens are generated via non-enzymatic condensation of metabolite intermediates of the riboflavin pathway with by-products arising from other metabolic pathways such as glycolysis. Typical potent antigenic metabolites are 5-(2-oxoethylideneamino)-6-D-ribitylaminouracil (5-OE-RU) and 5-(2-oxopropylideneamino)-6-D-ribitylaminouracil (5-OP-RU), products of condensation of 5-amino-6-D-ribityaminouracil (5-A-RU) with glyoxal or methylglyoxal by-products, respectively. May present microbial antigens to various MAIT cell subsets, providing for unique recognition of diverse microbes, including pathogens that do not synthesize riboflavin. Upon antigen recognition, elicits rapid innate-type MAIT cell activation to eliminate pathogenic microbes by directly killing infected cells. During T cell development, drives thymic selection and post-thymic terminal differentiation of MAIT cells in a process dependent on commensal microflora. Acts as an immune sensor of cancer cell metabolome. May present a tumor-specific or -associated metabolite essential for cancer cell survival to a pan-cancer TCR on a non-MAIT CD8-positive T cell clone, triggering T cell-mediated killing of a wide range of cancer cell types. May present tumor-enriched pyridoxal and pyridoxal 5'-phosphate antigens, enabling preferential recognition of cancer cells. Presents nucleobase carbonyl adducts generated during oxidative stress. Captures M3Ade, a nucleobase adduct composed of one adenine modified by a malondialdehyde trimer, for recognition by MR1-restricted T cell clones expressing a polyclonal TCR repertoire. The chain is Major histocompatibility complex class I-related protein 1 from Bos taurus (Bovine).